We begin with the raw amino-acid sequence, 45 residues long: LVPCAWAGNVCGEKRAYCCSDPGRYCPWQVVCYESSEICSKKCGK.

4 disulfide bridges follow: Cys4–Cys39, Cys11–Cys26, Cys18–Cys32, and Cys19–Cys43.

In terms of assembly, monomer.

In Ambrosia artemisiifolia var. elatior (Short ragweed), this protein is Pollen allergen Amb a 5.